The following is a 652-amino-acid chain: Transmembrane 9 superfamily member 12 (652 aa).

The first 20 residues, 1–20 (MFGVYRVFVLLVFVSQLCNG), serve as a signal peptide directing secretion. At 21–286 (FYLPGSYMHT…LKMEGARVHW (266 aa)) the chain is on the lumenal side. A helical transmembrane segment spans residues 287-307 (FSILNSLMVIFFLAGIVFVIF). The Cytoplasmic segment spans residues 308–362 (LRTVRRDLTKYEELDKEAQAQMNEELSGWKLVVGDVFREPEMSKLLCIMVGDGVR). The helical transmembrane segment at 363–383 (ITGMAVVTIVFAALGFMSPAS) threads the bilayer. Over 384–386 (RGM) the chain is Lumenal. A helical transmembrane segment spans residues 387 to 407 (LLTGMIILYLFLGIVAGYAGV). Residues 408-426 (RLWRTVKGTSEGWRSLSWS) lie on the Cytoplasmic side of the membrane. A helical transmembrane segment spans residues 427 to 447 (IACFFPGIAFVILTVLNFLLW). Residues 448–460 (SSNSTGAIPISLY) are Lumenal-facing. The chain crosses the membrane as a helical span at residues 461-481 (FELLALWFCISVPLTLFGGFL). Residues 482–510 (GTRAEAIQFPVRTNQIPREIPERKYPSWL) are Cytoplasmic-facing. Residues 511–531 (LVLGAGTLPFGTLFIELFFIF) traverse the membrane as a helical segment. Residues 532–541 (SSIWLGRFYY) are Lumenal-facing. A helical transmembrane segment spans residues 542–562 (VFGFLLIVLLLLVVVCAEVSV). The Cytoplasmic portion of the chain corresponds to 563–580 (VLTYMHLCVEDWRWWWKA). A helical transmembrane segment spans residues 581–601 (FYASGSVALYVFAYSINYLVF). At 602–613 (DLQSLSGPVSAM) the chain is on the lumenal side. The chain crosses the membrane as a helical span at residues 614–634 (LYIGYSLLMAIAIMLATGTIG). Residues 635–652 (FLTSFYFVHYLFSSVKID) lie on the Cytoplasmic side of the membrane. The Endoplasmic reticulum export signal signature appears at 641-646 (FVHYLF). A Golgi retention signal motif is present at residues 650 to 652 (KID).

The protein belongs to the nonaspanin (TM9SF) (TC 9.A.2) family.

The protein localises to the endosome membrane. Its subcellular location is the golgi apparatus membrane. In Arabidopsis thaliana (Mouse-ear cress), this protein is Transmembrane 9 superfamily member 12.